Reading from the N-terminus, the 491-residue chain is Cytochrome P450 2K3 (491 aa).

Cys-434 contributes to the heme binding site.

It belongs to the cytochrome P450 family. Heme serves as cofactor.

The protein resides in the endoplasmic reticulum membrane. The protein localises to the microsome membrane. The enzyme catalyses an organic molecule + reduced [NADPH--hemoprotein reductase] + O2 = an alcohol + oxidized [NADPH--hemoprotein reductase] + H2O + H(+). This is Cytochrome P450 2K3 (cyp2k3) from Oncorhynchus mykiss (Rainbow trout).